Here is a 692-residue protein sequence, read N- to C-terminus: MAREFSLEKTRNIGIMAHVDAGKTTTTERILYYTGKIHKIGETHEGASQMDWMEQEQERGITITSAATTAQWDGHRVNIIDTPGHVDFTIEVQRSLRVLDGAVTVLDAQSGVEPQTETVWRQATEYGVPRIVFANKMDKIGADFLYSVQSLHDRLQANAHPIQLPIGSEDDFRGIIDLIKMKAEIYTNDLGTDILEEDIPAEYVDQANEYREKLVEAVADTDEDLMMKYLEGEEITNEELMAAIRKATINVEFYPVLCGSAFKNKGVQLMLDAVIDYLPSPLDIPAIKGINPDTDEEETRPASDEEPFAALAFKIMTDPFVGRLTFFRVYSGVLNSGSYVLNTSKGKRERIGRILQMHANSRQEIETVYAGDIAAAVGLKDTTTGDSLTDEKSKVILESIEVPEPVIQLMVEPKSKADQDKMGIALQKLAEEDPTFRVETNVETGETVISGMGELHLDVLVDRMKREFKVEANVGAPQVSYRETFRASTQARGFFKRQSGGKGQFGDVWIEFTPNEEGKGFEFENAIVGGVVPREFIPAVEKGLVESMANGVLAGYPMVDVKAKLYDGSYHDVDSSETAFKIAASLALKEAAKSAQPAILEPMMLVTITAPEDNLGDVMGHVTARRGRVDGMEARGNTQVVRAFVPLAEMFGYATVLRSATQGRGTFMMVFDHYEDVPKSVQEEIIKKNSGE.

Residues 8–282 (EKTRNIGIMA…AVIDYLPSPL (275 aa)) enclose the tr-type G domain. GTP contacts are provided by residues 17-24 (AHVDAGKT), 81-85 (DTPGH), and 135-138 (NKMD).

This sequence belongs to the TRAFAC class translation factor GTPase superfamily. Classic translation factor GTPase family. EF-G/EF-2 subfamily.

It localises to the cytoplasm. Its function is as follows. Catalyzes the GTP-dependent ribosomal translocation step during translation elongation. During this step, the ribosome changes from the pre-translocational (PRE) to the post-translocational (POST) state as the newly formed A-site-bound peptidyl-tRNA and P-site-bound deacylated tRNA move to the P and E sites, respectively. Catalyzes the coordinated movement of the two tRNA molecules, the mRNA and conformational changes in the ribosome. This chain is Elongation factor G, found in Streptococcus agalactiae serotype Ia (strain ATCC 27591 / A909 / CDC SS700).